The following is a 144-amino-acid chain: Large ribosomal subunit protein uL15 (144 aa).

The segment at 1-57 (MFLNTLRPGEGSKHAPKRVGRGIGSGLGKTGGRGHKGLKSRSGGSVKPGFEGGQMPL) is disordered. Residues 21 to 31 (RGIGSGLGKTG) are compositionally biased toward gly residues.

Belongs to the universal ribosomal protein uL15 family. Part of the 50S ribosomal subunit.

In terms of biological role, binds to the 23S rRNA. This is Large ribosomal subunit protein uL15 from Marinomonas sp. (strain MWYL1).